Reading from the N-terminus, the 240-residue chain is Ribosomal RNA small subunit methyltransferase I (240 aa).

The protein belongs to the methyltransferase superfamily. RsmI family.

The protein resides in the cytoplasm. It carries out the reaction cytidine(1402) in 16S rRNA + S-adenosyl-L-methionine = 2'-O-methylcytidine(1402) in 16S rRNA + S-adenosyl-L-homocysteine + H(+). In terms of biological role, catalyzes the 2'-O-methylation of the ribose of cytidine 1402 (C1402) in 16S rRNA. The protein is Ribosomal RNA small subunit methyltransferase I of Leptospira biflexa serovar Patoc (strain Patoc 1 / ATCC 23582 / Paris).